Reading from the N-terminus, the 319-residue chain is Ornithine carbamoyltransferase (319 aa).

Carbamoyl phosphate-binding positions include 63 to 66 (STRT), glutamine 90, arginine 114, and 141 to 144 (HPCQ). L-ornithine contacts are provided by residues asparagine 172, aspartate 236, and 240–241 (SM). Carbamoyl phosphate contacts are provided by residues 276–277 (CL) and arginine 304.

Belongs to the aspartate/ornithine carbamoyltransferase superfamily. OTCase family.

It is found in the cytoplasm. It catalyses the reaction carbamoyl phosphate + L-ornithine = L-citrulline + phosphate + H(+). It participates in amino-acid biosynthesis; L-arginine biosynthesis; L-arginine from L-ornithine and carbamoyl phosphate: step 1/3. Its function is as follows. Reversibly catalyzes the transfer of the carbamoyl group from carbamoyl phosphate (CP) to the N(epsilon) atom of ornithine (ORN) to produce L-citrulline. This is Ornithine carbamoyltransferase from Halalkalibacterium halodurans (strain ATCC BAA-125 / DSM 18197 / FERM 7344 / JCM 9153 / C-125) (Bacillus halodurans).